The following is a 20-amino-acid chain: Probable cinnamyl alcohol dehydrogenase 1 (20 aa).

It belongs to the zinc-containing alcohol dehydrogenase family. It depends on Zn(2+) as a cofactor.

The catalysed reaction is (E)-cinnamyl alcohol + NADP(+) = (E)-cinnamaldehyde + NADPH + H(+). It catalyses the reaction (E)-coniferol + NADP(+) = (E)-coniferaldehyde + NADPH + H(+). It carries out the reaction (E)-sinapyl alcohol + NADP(+) = (E)-sinapaldehyde + NADPH + H(+). The enzyme catalyses (E)-4-coumaroyl alcohol + NADP(+) = (E)-4-coumaraldehyde + NADPH + H(+). The catalysed reaction is (E)-caffeyl alcohol + NADP(+) = (E)-caffeyl aldehyde + NADPH + H(+). The protein operates within aromatic compound metabolism; phenylpropanoid biosynthesis. Involved in lignin biosynthesis. Catalyzes the final step specific for the production of lignin monomers, like coniferyl alcohol, sinapyl alcohol and 4-coumaryl alcohol. The protein is Probable cinnamyl alcohol dehydrogenase 1 of Pseudotsuga menziesii (Douglas-fir).